Reading from the N-terminus, the 323-residue chain is Formyltetrahydrofolate deformylase 1, mitochondrial (323 aa).

The N-terminal 25 residues, 1–25, are a transit peptide targeting the mitochondrion; sequence MIRRITERASGFAKNIPILKSSRFH. The region spanning 41 to 124 is the ACT domain; the sequence is VHVFHCQDAV…SVVRVPSIDP (84 aa). The active site involves D267.

The protein belongs to the PurU family. In terms of tissue distribution, expressed in leaves, cotyledons, roots, seeds and flowers.

The protein localises to the mitochondrion. It catalyses the reaction (6R)-10-formyltetrahydrofolate + H2O = (6S)-5,6,7,8-tetrahydrofolate + formate + H(+). In terms of biological role, deformylase involved in photorespiration. Prevents excessive accumulation of 5-formyl tetrahydrofolate (THF), a potent inhibitor of the Gly decarboxylase/Ser hydroxymethyltransferase complex. This Arabidopsis thaliana (Mouse-ear cress) protein is Formyltetrahydrofolate deformylase 1, mitochondrial (PURU1).